Consider the following 155-residue polypeptide: uncharacterized protein (155 aa).

Residues T6–L155 enclose the N-acetyltransferase domain.

This sequence belongs to the acetyltransferase family.

This is an uncharacterized protein from Chlorobaculum tepidum (strain ATCC 49652 / DSM 12025 / NBRC 103806 / TLS) (Chlorobium tepidum).